An 86-amino-acid polypeptide reads, in one-letter code: uncharacterized protein (86 aa).

TPR repeat units follow at residues 8-41 (AEYY…NPFY) and 42-75 (RDAW…EKHL).

This is an uncharacterized protein from Methanocaldococcus jannaschii (strain ATCC 43067 / DSM 2661 / JAL-1 / JCM 10045 / NBRC 100440) (Methanococcus jannaschii).